Consider the following 177-residue polypeptide: MVMSAAMEAVRARIRDVPDFPQKGIVFKDITPVLADPTTFREVIDAFVARWKDERISKVVGIESRGFLFAAPLAYALGAGLTIARKPGKLPWETIREVYSLEYGENSLELHIDAVKAGERVLVVDDVLATGGTADAVGRLVTRQGATLVAYSFLVELGFLGGAKRLGREHVHALLSY.

This sequence belongs to the purine/pyrimidine phosphoribosyltransferase family. Homodimer.

The protein localises to the cytoplasm. The enzyme catalyses AMP + diphosphate = 5-phospho-alpha-D-ribose 1-diphosphate + adenine. It participates in purine metabolism; AMP biosynthesis via salvage pathway; AMP from adenine: step 1/1. In terms of biological role, catalyzes a salvage reaction resulting in the formation of AMP, that is energically less costly than de novo synthesis. The polypeptide is Adenine phosphoribosyltransferase (Anaeromyxobacter sp. (strain Fw109-5)).